Reading from the N-terminus, the 246-residue chain is Homeobox protein SIX6 (246 aa).

Residues 126-186 (WDGEQKTHCF…KNRRQRDRAA (61 aa)) constitute a DNA-binding region (homeobox). The interval 190–246 (NRLQQQVLSQGPGRVLRSEGEGTPEVLGVASSPAASLSSKAATSAISITSSDSECDI) is disordered. T212 carries the phosphothreonine modification. Residues 219–246 (ASSPAASLSSKAATSAISITSSDSECDI) show a composition bias toward low complexity. Phosphoserine occurs at positions 221, 225, 227, and 228.

Belongs to the SIX/Sine oculis homeobox family. Interacts with TLE4 and TLE5. As to expression, in the developing embryo, expressed mainly in the ventral optic stalk, optic chiasma, the neural retina and the primordial tissues that give rise to the pituitary/hypothalamus axis. Not expressed in the lens placode.

It is found in the nucleus. Functionally, may be involved in eye development. This Mus musculus (Mouse) protein is Homeobox protein SIX6 (Six6).